The primary structure comprises 157 residues: Transcription elongation factor GreA (157 aa).

This sequence belongs to the GreA/GreB family.

In terms of biological role, necessary for efficient RNA polymerase transcription elongation past template-encoded arresting sites. The arresting sites in DNA have the property of trapping a certain fraction of elongating RNA polymerases that pass through, resulting in locked ternary complexes. Cleavage of the nascent transcript by cleavage factors such as GreA or GreB allows the resumption of elongation from the new 3'terminus. GreA releases sequences of 2 to 3 nucleotides. The chain is Transcription elongation factor GreA from Caulobacter vibrioides (strain ATCC 19089 / CIP 103742 / CB 15) (Caulobacter crescentus).